The chain runs to 151 residues: MRTVIQRVKYAKVSVDGKILGEINKGLLVLLGITHEDSIKEVKWLVNKTKNLRIFEDEEEKMNLSLEDVKGKALIISQFTLYGNSIKGNRPSFIDAAKPDLAKDLYLKFIEELKSFDIETQEGEFGADMKVELLNDGPVTIIIDTKDANIK.

Residues Gly-137–Pro-138 carry the Gly-cisPro motif, important for rejection of L-amino acids motif.

It belongs to the DTD family. In terms of assembly, homodimer.

It is found in the cytoplasm. The catalysed reaction is glycyl-tRNA(Ala) + H2O = tRNA(Ala) + glycine + H(+). The enzyme catalyses a D-aminoacyl-tRNA + H2O = a tRNA + a D-alpha-amino acid + H(+). Its function is as follows. An aminoacyl-tRNA editing enzyme that deacylates mischarged D-aminoacyl-tRNAs. Also deacylates mischarged glycyl-tRNA(Ala), protecting cells against glycine mischarging by AlaRS. Acts via tRNA-based rather than protein-based catalysis; rejects L-amino acids rather than detecting D-amino acids in the active site. By recycling D-aminoacyl-tRNA to D-amino acids and free tRNA molecules, this enzyme counteracts the toxicity associated with the formation of D-aminoacyl-tRNA entities in vivo and helps enforce protein L-homochirality. This is D-aminoacyl-tRNA deacylase from Fusobacterium nucleatum subsp. nucleatum (strain ATCC 25586 / DSM 15643 / BCRC 10681 / CIP 101130 / JCM 8532 / KCTC 2640 / LMG 13131 / VPI 4355).